The following is a 440-amino-acid chain: Transposon Ty1-PR2 Gag polyprotein (440 aa).

Composition is skewed to polar residues over residues 1–10 (MESQQLSNYP), 48–60 (TKAN…TPAS), and 127–152 (QSQF…GNTF). Disordered stretches follow at residues 1 to 93 (MESQ…MMTQ), 126 to 173 (PQSQ…RPPP), and 352 to 440 (GSRN…PETY). A compositionally biased stretch (low complexity) spans 153-165 (TDSSSADSDMTST). The tract at residues 299–401 (NNGIHINNKV…NSKSKTARAH (103 aa)) is RNA-binding. Positions 402–418 (NVSTSNNSPSTDNDSIS) are enriched in low complexity. The residue at position 416 (serine 416) is a Phosphoserine. The segment covering 419 to 428 (KSTTEPIQLN) has biased composition (polar residues). Residues 429 to 440 (NKHDLHLRPETY) are compositionally biased toward basic and acidic residues.

Homotrimer.

Its subcellular location is the cytoplasm. Functionally, capsid protein (CA) is the structural component of the virus-like particle (VLP), forming the shell that encapsulates the retrotransposons dimeric RNA genome. The particles are assembled from trimer-clustered units and there are holes in the capsid shells that allow for the diffusion of macromolecules. CA also has nucleocapsid-like chaperone activity, promoting primer tRNA(i)-Met annealing to the multipartite primer-binding site (PBS), dimerization of Ty1 RNA and initiation of reverse transcription. This Saccharomyces cerevisiae (strain ATCC 204508 / S288c) (Baker's yeast) protein is Transposon Ty1-PR2 Gag polyprotein (TY1A-PR2).